Consider the following 225-residue polypeptide: Uracil-DNA glycosylase (225 aa).

Residue aspartate 65 is the Proton acceptor of the active site.

The protein belongs to the uracil-DNA glycosylase (UDG) superfamily. UNG family.

The protein resides in the cytoplasm. It carries out the reaction Hydrolyzes single-stranded DNA or mismatched double-stranded DNA and polynucleotides, releasing free uracil.. Its function is as follows. Excises uracil residues from the DNA which can arise as a result of misincorporation of dUMP residues by DNA polymerase or due to deamination of cytosine. The sequence is that of Uracil-DNA glycosylase from Bacillus mycoides (strain KBAB4) (Bacillus weihenstephanensis).